The sequence spans 407 residues: Probable endo-beta-1,4-glucanase celB (407 aa).

The first 18 residues, 1-18, serve as a signal peptide directing secretion; that stretch reads MALTLAATALVLLPLVTA. Asn136 carries N-linked (GlcNAc...) asparagine glycosylation. Glu216 acts as the Nucleophile in catalysis. Glu221 acts as the Proton donor in catalysis.

This sequence belongs to the glycosyl hydrolase 7 (cellulase C) family.

The protein localises to the secreted. It catalyses the reaction Endohydrolysis of (1-&gt;4)-beta-D-glucosidic linkages in cellulose, lichenin and cereal beta-D-glucans.. In terms of biological role, has endoglucanase activity on substrates containing beta-1,4 glycosidic bonds, like in carboxymethylcellulose (CMC), hydroxyethylcellulose (HEC) and beta-glucan. Involved in the degradation of complex natural cellulosic substrates. In Neosartorya fischeri (strain ATCC 1020 / DSM 3700 / CBS 544.65 / FGSC A1164 / JCM 1740 / NRRL 181 / WB 181) (Aspergillus fischerianus), this protein is Probable endo-beta-1,4-glucanase celB (celB).